Consider the following 253-residue polypeptide: Sulfate transporter CysZ (253 aa).

The next 4 helical transmembrane spans lie at 31–51, 72–92, 151–171, and 222–242; these read FVIL…WWLF, LSYI…GYFF, IVLL…PVLW, and IPVL…AMWV.

This sequence belongs to the CysZ family.

It localises to the cell inner membrane. Its function is as follows. High affinity, high specificity proton-dependent sulfate transporter, which mediates sulfate uptake. Provides the sulfur source for the cysteine synthesis pathway. The chain is Sulfate transporter CysZ from Escherichia fergusonii (strain ATCC 35469 / DSM 13698 / CCUG 18766 / IAM 14443 / JCM 21226 / LMG 7866 / NBRC 102419 / NCTC 12128 / CDC 0568-73).